The chain runs to 153 residues: MPSPGLVMESGQVLPAFLLCSTLLVIKMYAVAVITGQMRLRKKAFANPEDALKRGGLQYYRSDPDVERCLRAHRNDMETIYPFLFLGFVYSFLGPNPLIAWIHFLVVLTGRVVHTVAYLGKLNPRLRSGAYVLAQFSCFSMALQILWEVAHHL.

The Lumenal segment spans residues 1–13 (MPSPGLVMESGQV). Residues 14-42 (LPAFLLCSTLLVIKMYAVAVITGQMRLRK) form a helical membrane-spanning segment. R39 lines the glutathione pocket. The Cytoplasmic portion of the chain corresponds to 43–61 (KAFANPEDALKRGGLQYYR). A helical membrane pass occupies residues 62–91 (SDPDVERCLRAHRNDMETIYPFLFLGFVYS). 74-78 (RNDME) lines the glutathione pocket. The Lumenal portion of the chain corresponds to 92–96 (FLGPN). Residues 97–120 (PLIAWIHFLVVLTGRVVHTVAYLG) traverse the membrane as a helical segment. Glutathione contacts are provided by H114 and Y118. Over 121-124 (KLNP) the chain is Cytoplasmic. Residues 125–153 (RLRSGAYVLAQFSCFSMALQILWEVAHHL) traverse the membrane as a helical segment. A glutathione-binding site is contributed by 127-131 (RSGAY).

This sequence belongs to the MAPEG family. In terms of assembly, homotrimer. Requires glutathione as cofactor.

The protein resides in the membrane. Its subcellular location is the cytoplasm. It localises to the perinuclear region. It catalyses the reaction prostaglandin H2 = prostaglandin E2. The enzyme catalyses 2-glyceryl-prostaglandin H2 = 2-glyceryl-prostaglandin E2. The catalysed reaction is prostaglandin G2 = (15S)-15-hydroperoxy-prostaglandin E2. It carries out the reaction 1-chloro-2,4-dinitrobenzene + glutathione = 2,4-dinitrophenyl-S-glutathione + chloride + H(+). It catalyses the reaction (5S)-hydroperoxy-(6E,8Z,11Z,14Z)-eicosatetraenoate + 2 glutathione = (5S)-hydroxy-(6E,8Z,11Z,14Z)-eicosatetraenoate + glutathione disulfide + H2O. It functions in the pathway lipid metabolism; prostaglandin biosynthesis. Activity is increased markedly in macrophages and osteoblasts following pro-inflammatory stimuli. Terminal enzyme of the cyclooxygenase (COX)-2-mediated prostaglandin E2 (PGE2) biosynthetic pathway. Catalyzes the glutathione-dependent oxidoreduction of prostaglandin endoperoxide H2 (PGH2) to prostaglandin E2 (PGE2) in response to inflammatory stimuli. Plays a key role in inflammation response, fever and pain. Also catalyzes the oxidoreduction of endocannabinoids into prostaglandin glycerol esters and PGG2 into 15-hydroperoxy-PGE2. In addition, displays low glutathione transferase and glutathione-dependent peroxidase activities, toward 1-chloro-2,4-dinitrobenzene and 5-hydroperoxyicosatetraenoic acid (5-HPETE), respectively. This Mus musculus (Mouse) protein is Prostaglandin E synthase (Ptges).